We begin with the raw amino-acid sequence, 494 residues long: Glutamate--tRNA ligase (494 aa).

The short motif at 9–19 is the 'HIGH' region element; that stretch reads PSPTGDPHVGT. The short motif at 250–254 is the 'KMSKS' region element; sequence KLSKR. Residue Lys253 participates in ATP binding.

This sequence belongs to the class-I aminoacyl-tRNA synthetase family. Glutamate--tRNA ligase type 1 subfamily. In terms of assembly, monomer.

Its subcellular location is the cytoplasm. The enzyme catalyses tRNA(Glu) + L-glutamate + ATP = L-glutamyl-tRNA(Glu) + AMP + diphosphate. Its function is as follows. Catalyzes the attachment of glutamate to tRNA(Glu) in a two-step reaction: glutamate is first activated by ATP to form Glu-AMP and then transferred to the acceptor end of tRNA(Glu). The chain is Glutamate--tRNA ligase from Alcanivorax borkumensis (strain ATCC 700651 / DSM 11573 / NCIMB 13689 / SK2).